Reading from the N-terminus, the 222-residue chain is N-(5'-phosphoribosyl)anthranilate isomerase (222 aa).

Belongs to the TrpF family.

The enzyme catalyses N-(5-phospho-beta-D-ribosyl)anthranilate = 1-(2-carboxyphenylamino)-1-deoxy-D-ribulose 5-phosphate. It functions in the pathway amino-acid biosynthesis; L-tryptophan biosynthesis; L-tryptophan from chorismate: step 3/5. The sequence is that of N-(5'-phosphoribosyl)anthranilate isomerase from Beijerinckia indica subsp. indica (strain ATCC 9039 / DSM 1715 / NCIMB 8712).